Consider the following 131-residue polypeptide: Small ribosomal subunit protein uS11 (131 aa).

It belongs to the universal ribosomal protein uS11 family. In terms of assembly, part of the 30S ribosomal subunit. Interacts with proteins S7 and S18. Binds to IF-3.

Located on the platform of the 30S subunit, it bridges several disparate RNA helices of the 16S rRNA. Forms part of the Shine-Dalgarno cleft in the 70S ribosome. The polypeptide is Small ribosomal subunit protein uS11 (Exiguobacterium sibiricum (strain DSM 17290 / CCUG 55495 / CIP 109462 / JCM 13490 / 255-15)).